Here is a 513-residue protein sequence, read N- to C-terminus: Histidine ammonia-lyase (513 aa).

Residues 142-144 (ASG) constitute a cross-link (5-imidazolinone (Ala-Gly)). 2,3-didehydroalanine (Ser) is present on Ser-143.

It belongs to the PAL/histidase family. Post-translationally, contains an active site 4-methylidene-imidazol-5-one (MIO), which is formed autocatalytically by cyclization and dehydration of residues Ala-Ser-Gly.

It localises to the cytoplasm. The enzyme catalyses L-histidine = trans-urocanate + NH4(+). It functions in the pathway amino-acid degradation; L-histidine degradation into L-glutamate; N-formimidoyl-L-glutamate from L-histidine: step 1/3. The sequence is that of Histidine ammonia-lyase from Methylobacterium sp. (strain 4-46).